A 245-amino-acid chain; its full sequence is NAD-dependent protein deacylase (245 aa).

Positions 1-237 (MNFPYRNIVV…PKLVEELLAH (237 aa)) constitute a Deacetylase sirtuin-type domain. 13–32 (GAGISAESGIQTFRAQDGLW) contributes to the NAD(+) binding site. Residues Tyr-57 and Arg-60 each contribute to the substrate site. An NAD(+)-binding site is contributed by 94–97 (QNID). The active-site Proton acceptor is the His-112. Residues Cys-120 and Cys-139 each coordinate Zn(2+). NAD(+) is bound by residues 179-181 (GTS), 205-207 (NLE), and Ala-223.

Belongs to the sirtuin family. Class III subfamily. Zn(2+) is required as a cofactor.

The protein localises to the cytoplasm. The catalysed reaction is N(6)-acetyl-L-lysyl-[protein] + NAD(+) + H2O = 2''-O-acetyl-ADP-D-ribose + nicotinamide + L-lysyl-[protein]. The enzyme catalyses N(6)-succinyl-L-lysyl-[protein] + NAD(+) + H2O = 2''-O-succinyl-ADP-D-ribose + nicotinamide + L-lysyl-[protein]. NAD-dependent lysine deacetylase and desuccinylase that specifically removes acetyl and succinyl groups on target proteins. Modulates the activities of several proteins which are inactive in their acylated form. The protein is NAD-dependent protein deacylase of Vibrio vulnificus (strain CMCP6).